The following is a 349-amino-acid chain: D-alanine--D-alanine ligase (349 aa).

Positions 140 to 345 (NILFEAMGIP…MKDVFTWLLE (206 aa)) constitute an ATP-grasp domain. ATP is bound at residue 169–224 (NLSFSYPVFIKPTLGGSSVNTGMAKTAEEAMTLVDKIFVTDDRVLVQKLVSGTEVS). Mg(2+) contacts are provided by aspartate 300, glutamate 312, and asparagine 314.

The protein belongs to the D-alanine--D-alanine ligase family. Mg(2+) is required as a cofactor. Mn(2+) serves as cofactor.

It is found in the cytoplasm. The catalysed reaction is 2 D-alanine + ATP = D-alanyl-D-alanine + ADP + phosphate + H(+). The protein operates within cell wall biogenesis; peptidoglycan biosynthesis. Functionally, cell wall formation. In Leptospira biflexa serovar Patoc (strain Patoc 1 / Ames), this protein is D-alanine--D-alanine ligase.